Here is a 154-residue protein sequence, read N- to C-terminus: Basic phospholipase A2 PC20 (154 aa).

A signal peptide spans 1–21 (MYPAHLLVLLAVCVSLLGASA). Positions 22–27 (ISPRPL) are excised as a propeptide. Disulfide bonds link Cys38-Cys98, Cys54-Cys143, Cys56-Cys72, Cys71-Cys125, Cys78-Cys118, Cys87-Cys111, and Cys105-Cys116. Residues Tyr55, Ser57, and Gly59 each contribute to the Ca(2+) site. His75 is an active-site residue. Asp76 provides a ligand contact to Ca(2+). Residue Asp119 is part of the active site.

Belongs to the phospholipase A2 family. Group I subfamily. D49 sub-subfamily. Ca(2+) is required as a cofactor. In terms of tissue distribution, expressed by the venom gland.

Its subcellular location is the secreted. The catalysed reaction is a 1,2-diacyl-sn-glycero-3-phosphocholine + H2O = a 1-acyl-sn-glycero-3-phosphocholine + a fatty acid + H(+). Functionally, snake venom phospholipase A2 (PLA2) that inhibits neuromuscular transmission by blocking acetylcholine release from the nerve termini. PLA2 catalyzes the calcium-dependent hydrolysis of the 2-acyl groups in 3-sn-phosphoglycerides. The polypeptide is Basic phospholipase A2 PC20 (Laticauda colubrina (Yellow-lipped sea krait)).